Here is a 77-residue protein sequence, read N- to C-terminus: Acyl carrier protein (77 aa).

One can recognise a Carrier domain in the interval 2 to 77 (ADTLERVTKI…DAVNYIQNQQ (76 aa)). The residue at position 37 (Ser37) is an O-(pantetheine 4'-phosphoryl)serine.

The protein belongs to the acyl carrier protein (ACP) family. 4'-phosphopantetheine is transferred from CoA to a specific serine of apo-ACP by AcpS. This modification is essential for activity because fatty acids are bound in thioester linkage to the sulfhydryl of the prosthetic group.

The protein localises to the cytoplasm. The protein operates within lipid metabolism; fatty acid biosynthesis. Functionally, carrier of the growing fatty acid chain in fatty acid biosynthesis. This Bacillus subtilis (strain 168) protein is Acyl carrier protein (acpA).